The sequence spans 301 residues: uncharacterized protein (301 aa).

This sequence belongs to the asfivirus E301R family. As to quaternary structure, interacts with host IRF3.

In terms of biological role, plays a role in the inhibition of host innate immune system by acting as a negatively regulator of type I interferon production. Mechanistically, interacts with and prevents host IRF3 nuclear localization to inhibit its transcriptional activity. This is an uncharacterized protein from Ornithodoros (relapsing fever ticks).